The chain runs to 562 residues: Bifunctional coenzyme A synthase (562 aa).

2 positions are modified to phosphoserine: Ser-177 and Ser-182. A phosphopantetheine adenylyltransferase region spans residues 179–357; sequence VARSAKQPVR…HKRPELPPGC (179 aa). One can recognise a DPCK domain in the interval 359 to 562; the sequence is VIGLTGISGS…KRISEAPSDP (204 aa). 364–371 is a binding site for ATP; that stretch reads GISGSGKS.

In the central section; belongs to the eukaryotic CoaD family. As to quaternary structure, monomer. Post-translationally, the N-terminus is blocked.

The protein resides in the cytoplasm. Its subcellular location is the mitochondrion matrix. It catalyses the reaction (R)-4'-phosphopantetheine + ATP + H(+) = 3'-dephospho-CoA + diphosphate. It carries out the reaction 3'-dephospho-CoA + ATP = ADP + CoA + H(+). The protein operates within cofactor biosynthesis; coenzyme A biosynthesis; CoA from (R)-pantothenate: step 4/5. It functions in the pathway cofactor biosynthesis; coenzyme A biosynthesis; CoA from (R)-pantothenate: step 5/5. Its function is as follows. Bifunctional enzyme that catalyzes the fourth and fifth sequential steps of CoA biosynthetic pathway. The fourth reaction is catalyzed by the phosphopantetheine adenylyltransferase, coded by the coaD domain; the fifth reaction is catalyzed by the dephospho-CoA kinase, coded by the coaE domain. May act as a point of CoA biosynthesis regulation. In Sus scrofa (Pig), this protein is Bifunctional coenzyme A synthase.